Reading from the N-terminus, the 764-residue chain is Thyrotropin receptor (764 aa).

Positions 1-20 (MRPPPLLHLALLLALPRSLG) are cleaved as a signal peptide. At 21–413 (GKGCPSPPCE…EFNPCEDIMG (393 aa)) the chain is on the extracellular side. A disulfide bridge connects residues Cys31 and Cys41. N-linked (GlcNAc...) asparagine glycosylation is found at Asn77 and Asn99. 6 LRR repeats span residues 125–149 (LPLL…KVYS), 150–174 (TDVF…AFQG), 176–199 (CNET…AFNG), 201–223 (KLDA…AFGG), 225–248 (YSGP…GLEH), and 250–271 (KELI…SFLH). N-linked (GlcNAc...) asparagine glycans are attached at residues Asn177 and Asn198. N-linked (GlcNAc...) asparagine glycosylation occurs at Asn302. Tyr385 carries the post-translational modification Sulfotyrosine. Residues 414-441 (YKFLRIVVWFVSLLALLGNVFVLIVLLT) traverse the membrane as a helical segment. Topologically, residues 442-450 (SHYKLTVPR) are cytoplasmic. Residues 451 to 473 (FLMCNLAFADFCMGMYLLLIASV) traverse the membrane as a helical segment. The Extracellular portion of the chain corresponds to 474–494 (DLYTHSEYYNHAIDWQTGPGC). The cysteines at positions 494 and 569 are disulfide-linked. Residues 495–517 (NTAGFFTVFASELSVYTLTVITL) form a helical membrane-spanning segment. The Cytoplasmic portion of the chain corresponds to 518–537 (ERWYAITFAMRLDRKIRLRH). Residues 538–560 (AYAIMVGGWVCCFLLALLPLVGI) form a helical membrane-spanning segment. Residues 561-580 (SSYAKVSICLPMDTETPLAL) lie on the Extracellular side of the membrane. A helical transmembrane segment spans residues 581 to 602 (AYIILVLLLNIVAFIIVCSCYV). The Cytoplasmic segment spans residues 603-625 (KIYITVRNPQYNPGDKDTKIAKR). A helical transmembrane segment spans residues 626-649 (MAVLIFTDFMCMAPISFYALSALM). Residues 650–660 (NKPLITVTNSK) lie on the Extracellular side of the membrane. Residues 661–682 (ILLVLFYPLNSCANPFLYAIFT) form a helical membrane-spanning segment. The Cytoplasmic segment spans residues 683–764 (KAFQRDVFIL…ISKEYNQTVL (82 aa)). The PDZ-binding signature appears at 762–764 (TVL).

It belongs to the G-protein coupled receptor 1 family. FSH/LSH/TSH subfamily. In terms of assembly, interacts with heterodimer GPHA2:GPHB5; this interaction stimulates cAMP production. Interacts (via the PDZ-binding motif) with SCRIB; regulates TSHR trafficking and function. Glycosylated. Post-translationally, sulfated. Sulfation on Tyr-385 plays a role in thyrotropin receptor binding and activation.

It localises to the cell membrane. It is found in the basolateral cell membrane. Its function is as follows. Receptor for the thyroid-stimulating hormone (TSH) or thyrotropin. Also acts as a receptor for the heterodimeric glycoprotein hormone (GPHA2:GPHB5) or thyrostimulin. The activity of this receptor is mediated by G proteins which activate adenylate cyclase. Plays a central role in controlling thyroid cell metabolism. The protein is Thyrotropin receptor (TSHR) of Canis lupus familiaris (Dog).